The chain runs to 216 residues: FMN-dependent NADH:quinone oxidoreductase (216 aa).

FMN contacts are provided by residues 15–17 (SVS) and 139–142 (SRGG).

Belongs to the azoreductase type 1 family. In terms of assembly, homodimer. FMN is required as a cofactor.

It catalyses the reaction 2 a quinone + NADH + H(+) = 2 a 1,4-benzosemiquinone + NAD(+). The enzyme catalyses N,N-dimethyl-1,4-phenylenediamine + anthranilate + 2 NAD(+) = 2-(4-dimethylaminophenyl)diazenylbenzoate + 2 NADH + 2 H(+). In terms of biological role, quinone reductase that provides resistance to thiol-specific stress caused by electrophilic quinones. Functionally, also exhibits azoreductase activity. Catalyzes the reductive cleavage of the azo bond in aromatic azo compounds to the corresponding amines. The sequence is that of FMN-dependent NADH:quinone oxidoreductase from Acidovorax ebreus (strain TPSY) (Diaphorobacter sp. (strain TPSY)).